A 565-amino-acid polypeptide reads, in one-letter code: Putative pentatricopeptide repeat-containing protein At3g05240 (565 aa).

PPR repeat units follow at residues 37–70, 71–105, 106–140, 141–171, 172–206, 207–241, 250–280, 281–315, 316–350, 351–381, 382–416, 418–448, and 454–484; these read NVIP…IDCP, SVYI…GYSP, DYFT…GFEV, NMYV…IPQW, NVVA…GVKA, NETI…GFDP, NVIL…MPER, TLVS…GIAP, DKVT…GFVK, DAAI…LEKK, DTIA…GNAT, DGIT…MRDL, and TVEH…MPVK. The segment at 489–564 is type E motif; that stretch reads IWGALLNGCD…VLGHSSVETM (76 aa).

The protein belongs to the PPR family. PCMP-E subfamily.

The chain is Putative pentatricopeptide repeat-containing protein At3g05240 (PCMP-E82) from Arabidopsis thaliana (Mouse-ear cress).